The sequence spans 266 residues: Putative hydro-lyase Jann_2570 (266 aa).

It belongs to the D-glutamate cyclase family.

In Jannaschia sp. (strain CCS1), this protein is Putative hydro-lyase Jann_2570.